Reading from the N-terminus, the 84-residue chain is SPbeta prophage-derived uncharacterized protein YomY (84 aa).

This Bacillus subtilis (strain 168) protein is SPbeta prophage-derived uncharacterized protein YomY (yomY).